The sequence spans 1943 residues: Sickle tail protein homolog (1943 aa).

2 disordered regions span residues 1–79 (MEEN…KEIL) and 112–177 (QERL…RSTN). Over residues 38 to 47 (AECRRTKERL) the composition is skewed to basic and acidic residues. The span at 48-62 (SNGNSRGSVSKSSRN) shows a compositional bias: polar residues. Ser169 carries the phosphoserine modification. The residue at position 244 (Tyr244) is a Phosphotyrosine. The segment at 290–331 (ARGDGPGAPRPGSTAHPPHAIPNSPPSTPVPHSMPPSPSRIP) is disordered. The segment covering 308-328 (HAIPNSPPSTPVPHSMPPSPS) has biased composition (pro residues). Ser357 carries O-linked (GlcNAc) serine glycosylation. A phosphoserine mark is found at Ser361 and Ser365. Tyr393 carries the post-translational modification Phosphotyrosine. Positions 456–476 (RKYPDSHLPTLGSKTPPASPH) are disordered. Position 470 is a phosphothreonine (Thr470). Phosphoserine is present on residues Ser474 and Ser526. Coiled coils occupy residues 557–581 (RETR…QSAL) and 644–685 (MSLL…ELEI). Ser809 carries the post-translational modification Phosphoserine. A disordered region spans residues 848-874 (VLKSQEEAAHTSGQPFHSTGAPGDAKS). The stretch at 957–985 (SAKNRAVSIEKAEKKWEEKRQNLDHYNGK) forms a coiled coil. Disordered stretches follow at residues 1003–1230 (PNLE…SDAS), 1305–1329 (KTKE…TESS), and 1352–1377 (PKEA…TEEN). A phosphoserine mark is found at Ser1027, Ser1030, Ser1033, and Ser1044. Over residues 1044–1053 (SPPPPPPPPR) the composition is skewed to pro residues. Basic and acidic residues-rich tracts occupy residues 1155–1167 (EPSR…KDTR), 1174–1192 (PKEK…KSDV), and 1305–1318 (KTKE…DKCH). Residues 1368–1377 (SSSSSPTEEN) are compositionally biased toward polar residues. Ser1461 carries the post-translational modification Phosphoserine. A coiled-coil region spans residues 1464-1490 (FEECDEELERMMMEEKIEEEEEEENGD). Disordered regions lie at residues 1481–1572 (EEEE…PKKK), 1606–1660 (EEEE…EIRK), and 1677–1943 (ENTI…KETS). Composition is skewed to polar residues over residues 1491–1501 (SVVQNNNTSQM) and 1512–1533 (RTGQ…TRNP). Composition is skewed to basic and acidic residues over residues 1539–1548 (NRTELNKFSH) and 1612–1625 (GTLK…RFEI). Positions 1643 to 1653 (QPSIESTSPIS) are enriched in polar residues. A coiled-coil region spans residues 1656–1686 (DEIRKNTYRTLDSLEQTIKQLENTISEMSPK). 2 stretches are compositionally biased toward polar residues: residues 1691–1706 (TSCS…SSHI) and 1731–1747 (IPSA…QTSR). Ser1739 is subject to Phosphoserine. Over residues 1763-1775 (KPGKQSKLQDPRQ) the composition is skewed to basic and acidic residues. Residues 1806–1825 (SPSSGKSSSLPSSSGDSSNL) are compositionally biased toward low complexity. Polar residues-rich tracts occupy residues 1834-1843 (SIASNPLSPQ) and 1853-1869 (LIPS…SLTH). Ser1841 carries the post-translational modification Phosphoserine. Low complexity predominate over residues 1892–1905 (SFSSSPPSPASSVS). Ser1896, Ser1899, and Ser1902 each carry phosphoserine. A compositionally biased stretch (polar residues) spans 1906–1943 (LNQGAKGTRTIHTPSLTSYKAQNGSSSKATPSTAKETS).

As to quaternary structure, interacts with CPNE4 (via VWFA domain).

It is found in the cytoplasm. It localises to the cytoskeleton. The protein localises to the microtubule organizing center. The protein resides in the centrosome. Its function is as follows. Required for normal development of intervertebral disks. The polypeptide is Sickle tail protein homolog (KIAA1217) (Homo sapiens (Human)).